We begin with the raw amino-acid sequence, 820 residues long: Breast cancer anti-estrogen resistance protein 3 homolog (820 aa).

An N-acetylalanine modification is found at Ala2. A phosphoserine mark is found at Ser32, Ser72, Ser77, Ser176, and Ser284. The disordered stretch occupies residues 40–81 (DAYQDVSIHGTLPRKKKGPPSIRSCDNAGHSKSPRQSSPLTQ). The 100-residue stretch at 148-247 (WYHGRIPRQV…QSGAIIFQPI (100 aa)) folds into the SH2 domain. Lys329 carries the post-translational modification N6-methyllysine. The tract at residues 346–367 (QSPSMDTSPCPSSPVFRTGSEP) is disordered. A phosphoserine mark is found at Ser353, Ser358, and Ser370. The residue at position 437 (Arg437) is an Omega-N-methylarginine. Ser466 carries the post-translational modification Phosphoserine. Residues 543–813 (DARVIAQHML…TALSRKLEPP (271 aa)) form the Ras-GEF domain. Residues 739–743 (LATAR) are mediates the interaction with BCAR1/p130CAS.

In terms of assembly, part of a complex comprised of PTPRA, BCAR1, BCAR3 (via SH2 domain) and SRC; the formation of the complex is dependent on integrin mediated-tyrosine phosphorylation of PTPRA. Within the complex, interacts (via SH2 domain) with PTPRA (when phosphorylated on 'Tyr-825'). Interacts (via Ras-GEF domain) with BCAR1. Interacts (via Ras-GEF domain) with NEDD9. Interacts with PTK2B/FAK1. Interacts with PTPN1. Interacts (via SH2 domain) with EGFR (when tyrosine-phosphorylated). Post-translationally, phosphorylated on tyrosine residues. Abundantly expressed in the lung and brain, with lower expression in splenic lymphocytes and liver (at protein level). Expressed in splenic lymphocytes (at protein level). Expressed in the lymph node cortical region, periphery of the splenic white pulp and in alveolar lung fibroblasts. Expressed in epithelial cells in the lens equatorial region and early stage nucleated cortical lens fiber cells. Expressed in the thymus. Expressed in B-cells.

It localises to the cytoplasm. The protein localises to the cell junction. Its subcellular location is the focal adhesion. Its function is as follows. Acts as an adapter protein downstream of several growth factor receptors to promote cell proliferation, migration, and redistribution of actin fibers. Specifically involved in INS/insulin signaling pathway by mediating MAPK1/ERK2-MAPK3/ERK1 activation and DNA synthesis. Promotes insulin-mediated membrane ruffling. In response to vasoconstrictor peptide EDN1, involved in the activation of RAP1 downstream of PTK2B via interaction with phosphorylated BCAR1. Inhibits cell migration and invasion via regulation of TGFB-mediated matrix digestion, actin filament rearrangement, and inhibition of invadopodia activity. May inhibit TGFB-SMAD signaling, via facilitating BCAR1 and SMAD2 and/or SMAD3 interaction. Regulates EGF-induced DNA synthesis. Required for the maintenance of ocular lens morphology and structural integrity, potentially via regulation of focal adhesion complex signaling. Acts upstream of PTPRA to regulate the localization of BCAR1 and PTPRA to focal adhesions, via regulation of SRC-mediated phosphorylation of PTPRA. Positively regulates integrin-induced tyrosine phosphorylation of BCAR1. Acts as a guanine nucleotide exchange factor (GEF) for small GTPases RALA, RAP1A and RRAS. However, in a contrasting study, lacks GEF activity towards RAP1. This chain is Breast cancer anti-estrogen resistance protein 3 homolog (Bcar3), found in Mus musculus (Mouse).